Here is a 416-residue protein sequence, read N- to C-terminus: tRNA(Met) cytidine acetate ligase (416 aa).

ATP-binding positions include 7-20 (VVEYNPFHNGHLHH), Gly-101, Asn-162, and 187-188 (RI).

This sequence belongs to the TmcAL family.

It localises to the cytoplasm. The catalysed reaction is cytidine(34) in elongator tRNA(Met) + acetate + ATP = N(4)-acetylcytidine(34) in elongator tRNA(Met) + AMP + diphosphate. In terms of biological role, catalyzes the formation of N(4)-acetylcytidine (ac(4)C) at the wobble position of elongator tRNA(Met), using acetate and ATP as substrates. First activates an acetate ion to form acetyladenylate (Ac-AMP) and then transfers the acetyl group to tRNA to form ac(4)C34. The chain is tRNA(Met) cytidine acetate ligase from Halalkalibacterium halodurans (strain ATCC BAA-125 / DSM 18197 / FERM 7344 / JCM 9153 / C-125) (Bacillus halodurans).